Reading from the N-terminus, the 20-residue chain is Protein PR-L3 (20 aa).

Belongs to the BetVI family.

This is Protein PR-L3 from Lupinus luteus (European yellow lupine).